A 333-amino-acid chain; its full sequence is Cilia- and flagella-associated protein 119 (333 aa).

The segment covering 1–10 has biased composition (polar residues); it reads MITPSSSQSL. Disordered stretches follow at residues 1-70 and 309-333; these read MITP…ANLF and RLSS…TKTK. Serine 34 is modified (phosphoserine). Residues 44–58 are compositionally biased toward polar residues; the sequence is TDMQTESPAEATSSP. A coiled-coil region spans residues 284 to 319; the sequence is IKSQLSKELRQLQQLVEERLKESEERLSSKLAALEQ.

Its subcellular location is the cell projection. It is found in the cilium. The protein localises to the flagellum. The protein resides in the cytoplasmic vesicle. It localises to the secretory vesicle. Its subcellular location is the acrosome. It is found in the cytoplasm. This Mus musculus (Mouse) protein is Cilia- and flagella-associated protein 119.